Reading from the N-terminus, the 214-residue chain is Nigrelysin (214 aa).

The signal sequence occupies residues 1–21 (MKNRLVIIVFMVVTMLCASLA). Positions 22-35 (LPLEEKEDEKDEKR) are excised as a propeptide. The plays an important role in the hemolytic activity stretch occupies residues 38 to 47 (EVAGAVMEGA). The N-terminal region stretch occupies residues 46 to 65 (GANLGMSVLQTILQAIGDVS). The phosphocholine site is built by Ser-89, Val-122, Ser-140, Pro-142, Tyr-168, Tyr-172, and Tyr-173. Positions 140 to 155 (SVPYDYNWYSNWWNVK) are trp-rich region, which is important for the binding to lipid membrane. A Cell attachment site, crucial for protein stability motif is present at residues 179 to 181 (KGD).

This sequence belongs to the actinoporin family. Sea anemone subfamily. As to quaternary structure, octamer or nonamer in membranes. Monomer in the soluble state.

The protein resides in the secreted. It localises to the nematocyst. Its subcellular location is the target cell membrane. Functionally, pore-forming protein that forms cation-selective hydrophilic pores in cell membranes and causes cytolysis. Pore formation is a multi-step process that involves specific recognition of membrane sphingomyelin (but neither cholesterol nor phosphatidylcholine) using aromatic rich region and adjacent phosphocholine (POC) binding site, firm binding to the membrane (mainly driven by hydrophobic interactions) accompanied by the transfer of the N-terminal region to the lipid-water interface and finally pore formation after oligomerization of monomers. This protein shows potent hemolytic activity (EC(50)=0.09 nM), as well as potent cytotoxic activity on nucleated cells (L1210 cells). The cytotoxic process starts with cellular swelling that is time and dose dependent and occurs up to a critical volume, probably due to influx of water via pores opened by this actinoporin. The second phase consists of the final loss of membrane integrity that leads to cytolysis. The polypeptide is Nigrelysin (Anthopleura nigrescens (Sea anemone)).